We begin with the raw amino-acid sequence, 288 residues long: Acetyl-coenzyme A carboxylase carboxyl transferase subunit beta (288 aa).

Residues 34–288 (LFAKCPACKH…HLVAFHGGGQ (255 aa)) form the CoA carboxyltransferase N-terminal domain. Residues Cys-38, Cys-41, Cys-56, and Cys-59 each coordinate Zn(2+). The segment at 38-59 (CPACKHMIYKKDLGLAKICPTC) adopts a C4-type zinc-finger fold.

The protein belongs to the AccD/PCCB family. Acetyl-CoA carboxylase is a heterohexamer composed of biotin carboxyl carrier protein (AccB), biotin carboxylase (AccC) and two subunits each of ACCase subunit alpha (AccA) and ACCase subunit beta (AccD). Zn(2+) is required as a cofactor.

It localises to the cytoplasm. It catalyses the reaction N(6)-carboxybiotinyl-L-lysyl-[protein] + acetyl-CoA = N(6)-biotinyl-L-lysyl-[protein] + malonyl-CoA. It participates in lipid metabolism; malonyl-CoA biosynthesis; malonyl-CoA from acetyl-CoA: step 1/1. In terms of biological role, component of the acetyl coenzyme A carboxylase (ACC) complex. Biotin carboxylase (BC) catalyzes the carboxylation of biotin on its carrier protein (BCCP) and then the CO(2) group is transferred by the transcarboxylase to acetyl-CoA to form malonyl-CoA. The polypeptide is Acetyl-coenzyme A carboxylase carboxyl transferase subunit beta (Streptococcus pyogenes serotype M3 (strain ATCC BAA-595 / MGAS315)).